The sequence spans 369 residues: 2-aminoethylphosphonate--pyruvate transaminase (369 aa).

Lysine 193 carries the N6-(pyridoxal phosphate)lysine modification.

The protein belongs to the class-V pyridoxal-phosphate-dependent aminotransferase family. PhnW subfamily. Homodimer. Requires pyridoxal 5'-phosphate as cofactor.

The catalysed reaction is (2-aminoethyl)phosphonate + pyruvate = phosphonoacetaldehyde + L-alanine. In terms of biological role, involved in phosphonate degradation. The sequence is that of 2-aminoethylphosphonate--pyruvate transaminase from Pseudomonas fluorescens (strain Pf0-1).